The following is a 178-amino-acid chain: ATP synthase subunit delta (178 aa).

Belongs to the ATPase delta chain family. In terms of assembly, F-type ATPases have 2 components, F(1) - the catalytic core - and F(0) - the membrane proton channel. F(1) has five subunits: alpha(3), beta(3), gamma(1), delta(1), epsilon(1). F(0) has three main subunits: a(1), b(2) and c(10-14). The alpha and beta chains form an alternating ring which encloses part of the gamma chain. F(1) is attached to F(0) by a central stalk formed by the gamma and epsilon chains, while a peripheral stalk is formed by the delta and b chains.

It is found in the cell membrane. F(1)F(0) ATP synthase produces ATP from ADP in the presence of a proton or sodium gradient. F-type ATPases consist of two structural domains, F(1) containing the extramembraneous catalytic core and F(0) containing the membrane proton channel, linked together by a central stalk and a peripheral stalk. During catalysis, ATP synthesis in the catalytic domain of F(1) is coupled via a rotary mechanism of the central stalk subunits to proton translocation. In terms of biological role, this protein is part of the stalk that links CF(0) to CF(1). It either transmits conformational changes from CF(0) to CF(1) or is implicated in proton conduction. The sequence is that of ATP synthase subunit delta from Streptococcus agalactiae serotype Ia (strain ATCC 27591 / A909 / CDC SS700).